The primary structure comprises 312 residues: Probable carboxylesterase 7 (312 aa).

An N-acetylmethionine modification is found at M1. The Involved in the stabilization of the negatively charged intermediate by the formation of the oxyanion hole signature appears at 75–77 (HGG). Active-site residues include S159, D255, and H287.

This sequence belongs to the 'GDXG' lipolytic enzyme family. As to expression, expressed in leaves, stems, flowers and siliques.

The catalysed reaction is a carboxylic ester + H2O = an alcohol + a carboxylate + H(+). Functionally, carboxylesterase acting on esters with varying acyl chain length. This Arabidopsis thaliana (Mouse-ear cress) protein is Probable carboxylesterase 7 (CXE7).